The primary structure comprises 151 residues: MATLLVLHGPNLNLLGTREPGHYGAVTLAQINQDLEQRARAAGHHLLYLQSNAEYELIDRIHAARNEGVDFILINPAAFTHTSVALRDALLAVSIPFIEVHLSNVHKREPFRHHSYFSDVAVGVICGLGASGYRLALESALEQLAANAQPK.

The active-site Proton acceptor is tyrosine 23. Substrate contacts are provided by asparagine 75, histidine 81, and aspartate 88. Catalysis depends on histidine 101, which acts as the Proton donor. Residues leucine 102 to serine 103 and arginine 112 contribute to the substrate site.

The protein belongs to the type-II 3-dehydroquinase family. As to quaternary structure, homododecamer.

It catalyses the reaction 3-dehydroquinate = 3-dehydroshikimate + H2O. It participates in metabolic intermediate biosynthesis; chorismate biosynthesis; chorismate from D-erythrose 4-phosphate and phosphoenolpyruvate: step 3/7. Catalyzes a trans-dehydration via an enolate intermediate. This Pseudomonas putida (strain ATCC 47054 / DSM 6125 / CFBP 8728 / NCIMB 11950 / KT2440) protein is 3-dehydroquinate dehydratase 1 (aroQ1).